Consider the following 1482-residue polypeptide: Calcium-dependent protein kinase 6 (1482 aa).

2 disordered regions span residues 250 to 320 and 739 to 760; these read TNNY…IRPN and SENF…DDSN. The span at 254–264 shows a compositional bias: polar residues; sequence AHDNNQDSNSY. The segment covering 277–301 has biased composition (acidic residues); the sequence is EEDNDTGDTYADNEEDEDNRDDNDD. The span at 302–318 shows a compositional bias: polar residues; that stretch reads YSQYNQCEVESDTNQIR. Low complexity predominate over residues 739–748; it reads SENFSNNFND. Over residues 749–760 the composition is skewed to basic and acidic residues; it reads NKQKSLKNDDSN. 2 consecutive EF-hand domains span residues 931-966 and 972-1007; these read IFER…LCYN and VDKK…LLKQ. Positions 985, 987, 989, 991, and 996 each coordinate Ca(2+). One can recognise a Protein kinase domain in the interval 1043–1295; it reads LSFKKILGCG…AAVLLHHPWF (253 aa). ATP contacts are provided by residues 1049–1057 and Lys1072; that span reads LGCGAFGEV. Asp1162 acts as the Proton acceptor in catalysis. 4 EF-hand domains span residues 1338–1373, 1376–1406, 1407–1442, and 1468–1482; these read NHVK…AGVK, DINR…RWKN, IDST…NGVN, and KISF…LSTF. Ca(2+) contacts are provided by Asp1351, Asn1353, Asn1355, Ser1357, and Glu1362. The Ca(2+) site is built by Asp1420, Asp1422, Asp1424, Tyr1426, and Asp1431.

The protein belongs to the protein kinase superfamily. Ser/Thr protein kinase family. CDPK subfamily. The cofactor is Mg(2+).

It catalyses the reaction L-seryl-[protein] + ATP = O-phospho-L-seryl-[protein] + ADP + H(+). The enzyme catalyses L-threonyl-[protein] + ATP = O-phospho-L-threonyl-[protein] + ADP + H(+). Its activity is regulated as follows. Activated by calcium. Functionally, calcium-dependent protein kinase which acts as a sensor and effector of intracellular Ca(2+) levels. In sporozoites, probably involved in the secretion of the cysteine protease that cleaves circumsporozoite protein CSP, thereby exposing CSP TSR domain, which binds with high affinity to highly sulfated heparan sulfate proteoglycans (HSPGs), resulting in productive invasion of the host hepatocytes. This Plasmodium berghei (strain Anka) protein is Calcium-dependent protein kinase 6.